The chain runs to 566 residues: Phenylalanine--tRNA ligase beta subunit (566 aa).

The B5 domain maps to 287-362 (YFQEEVEFNV…IGEGLSSFNP (76 aa)). Aspartate 340, aspartate 346, glutamate 349, and aspartate 350 together coordinate Mg(2+).

It belongs to the phenylalanyl-tRNA synthetase beta subunit family. Type 2 subfamily. Tetramer of two alpha and two beta subunits. It depends on Mg(2+) as a cofactor.

Its subcellular location is the cytoplasm. It carries out the reaction tRNA(Phe) + L-phenylalanine + ATP = L-phenylalanyl-tRNA(Phe) + AMP + diphosphate + H(+). In Borreliella burgdorferi (strain ATCC 35210 / DSM 4680 / CIP 102532 / B31) (Borrelia burgdorferi), this protein is Phenylalanine--tRNA ligase beta subunit.